The following is a 105-amino-acid chain: Ketoisovalerate oxidoreductase subunit VorD (105 aa).

4Fe-4S ferredoxin-type domains follow at residues 44-73 (FKPV…IKPD) and 74-103 (GYVA…MIKE). 8 residues coordinate [4Fe-4S] cluster: Cys-53, Cys-56, Cys-59, Cys-63, Cys-83, Cys-86, Cys-89, and Cys-93.

In terms of assembly, heterotetramer of one alpha, one beta, one delta and one gamma chain. [4Fe-4S] cluster is required as a cofactor.

The catalysed reaction is 3-methyl-2-oxobutanoate + 2 oxidized [2Fe-2S]-[ferredoxin] + CoA = 2-methylpropanoyl-CoA + 2 reduced [2Fe-2S]-[ferredoxin] + CO2 + H(+). This Pyrococcus furiosus (strain ATCC 43587 / DSM 3638 / JCM 8422 / Vc1) protein is Ketoisovalerate oxidoreductase subunit VorD (vorD).